Here is a 592-residue protein sequence, read N- to C-terminus: Pyruvate decarboxylase 3 (592 aa).

Substrate-binding residues include D54 and H141. The segment at 419–501 (DSWFNCQKLK…FLINNGGYTI (83 aa)) is thiamine pyrophosphate binding. 3 residues coordinate Mg(2+): D469, N496, and G498. E502 serves as a coordination point for substrate.

Belongs to the TPP enzyme family. In terms of assembly, homotetramer. Requires a metal cation as cofactor. The cofactor is thiamine diphosphate. In terms of tissue distribution, expressed at low levels in roots and shoots.

The enzyme catalyses a 2-oxocarboxylate + H(+) = an aldehyde + CO2. The chain is Pyruvate decarboxylase 3 (PDC3) from Arabidopsis thaliana (Mouse-ear cress).